A 537-amino-acid polypeptide reads, in one-letter code: Myosin-binding protein H (537 aa).

The span at 1-25 shows a compositional bias: low complexity; the sequence is MTGKTAPAAAKKAPAAKKAPAPASK. Residues 1 to 138 form a disordered region; that stretch reads MTGKTAPAAA…KPKEEPPSVP (138 aa). A compositionally biased stretch (basic and acidic residues) spans 26-69; that stretch reads KAPEPAPKEKPAPTPKEGHAPTPKEEHAPPPKEEHAPPPKEEHA. Over residues 87–104 the composition is skewed to low complexity; the sequence is EQPAAPAAEHAPTPTHEA. The span at 112–124 shows a compositional bias: pro residues; the sequence is PPPAAPAEAPAPE. Positions 137 to 232 constitute a Fibronectin type-III 1 domain; sequence VPLSLAVEEV…LEQPVLIREI (96 aa). Positions 236–324 constitute an Ig-like C2-type 1 domain; it reads PRIRLPRQLR…NGAEDKAILD (89 aa). The region spanning 333–428 is the Fibronectin type-III 2 domain; the sequence is PPQNLKLVDV…AAGVAHIKKT (96 aa). The region spanning 444 to 528 is the Ig-like C2-type 2 domain; that stretch reads PKFTQPLTDR…VNPLGEASVD (85 aa).

This sequence belongs to the immunoglobulin superfamily. MyBP family. In terms of tissue distribution, skeletal muscle. Seems to be also expressed in the slow tonic ald muscle. Not detected in gizzard or heart.

Binds to myosin; probably involved in interaction with thick myofilaments in the A-band. The chain is Myosin-binding protein H (MYBPH) from Gallus gallus (Chicken).